A 140-amino-acid chain; its full sequence is uncharacterized protein (140 aa).

This is an uncharacterized protein from Xylella fastidiosa (strain 9a5c).